We begin with the raw amino-acid sequence, 113 residues long: DNA-binding protein Mevan_1162 (113 aa).

A compositionally biased stretch (basic and acidic residues) spans 1–12 (MDPEEIKQKKLQ). The segment at 1-22 (MDPEEIKQKKLQEMQAKAQDPE) is disordered.

It belongs to the PDCD5 family.

The polypeptide is DNA-binding protein Mevan_1162 (Methanococcus vannielii (strain ATCC 35089 / DSM 1224 / JCM 13029 / OCM 148 / SB)).